The following is a 406-amino-acid chain: RILP-like protein 1 (406 aa).

Phosphoserine is present on serine 7. The region spanning 10–97 is the RH1 domain; that stretch reads AALSALEKNV…RVERMDRIEK (88 aa). An S-nitrosocysteine modification is found at cysteine 47. Positions 76–258 form a coiled coil; it reads ELDELRLELD…KLRERLQGEH (183 aa). Disordered stretches follow at residues 255–280 and 330–354; these read QGEHSQNGEEEEAEIQPQPDGEESIS and EIEEENRIPQPPPITHPRTSPQPES. Serine 259 bears the Phosphoserine mark. Residues 262 to 280 show a composition bias toward acidic residues; sequence GEEEEAEIQPQPDGEESIS. Residues 294-359 form the RH2 domain; it reads RPRFTLQELR…PQPESGIKRL (66 aa).

This sequence belongs to the RILPL family. As to quaternary structure, interacts (when S-nitrosylated) with GAPDH. Interacts with RAB8A; interaction is dependent on the phosphorylation of 'Thr-72' of RAB8A. Interacts with RAB10 and RAB12; the interaction is dependent on the phosphorylation of 'Thr-73' of RAB10, and 'Ser-105' of RAB12. S-nitrosylation is required for the interaction with GAPDH.

Its subcellular location is the cytoplasm. The protein resides in the cytosol. The protein localises to the cell projection. It localises to the cilium. It is found in the cytoskeleton. Its subcellular location is the microtubule organizing center. The protein resides in the centrosome. The protein localises to the centriole. Neuroprotective protein, which acts by sequestring GAPDH in the cytosol and prevent the apoptotic function of GAPDH in the nucleus. Competes with SIAH1 for binding GAPDH. Does not regulate lysosomal morphology and distribution. Plays a role in the regulation of cell shape and polarity. Plays a role in cellular protein transport, including protein transport away from primary cilia. Binds to RAB10 following LRRK2-mediated RAB10 phosphorylation which leads to inhibition of ciliogenesis. In Mus musculus (Mouse), this protein is RILP-like protein 1 (Rilpl1).